The primary structure comprises 222 residues: 7-carboxy-7-deazaguanine synthase (222 aa).

Residues 16-18 (LQG) and arginine 31 contribute to the substrate site. The Radical SAM core domain occupies 22–222 (NLGRPAVFVR…IMAWGNARGK (201 aa)). [4Fe-4S] cluster-binding residues include cysteine 35, cysteine 39, and cysteine 42. Threonine 44 is a binding site for Mg(2+). Threonine 77 is a substrate binding site. Residues glycine 79 and 126-128 (SPK) contribute to the S-adenosyl-L-methionine site.

This sequence belongs to the radical SAM superfamily. 7-carboxy-7-deazaguanine synthase family. In terms of assembly, homodimer. Requires [4Fe-4S] cluster as cofactor. S-adenosyl-L-methionine serves as cofactor. The cofactor is Mg(2+).

It carries out the reaction 6-carboxy-5,6,7,8-tetrahydropterin + H(+) = 7-carboxy-7-deazaguanine + NH4(+). It participates in purine metabolism; 7-cyano-7-deazaguanine biosynthesis. Functionally, catalyzes the complex heterocyclic radical-mediated conversion of 6-carboxy-5,6,7,8-tetrahydropterin (CPH4) to 7-carboxy-7-deazaguanine (CDG), a step common to the biosynthetic pathways of all 7-deazapurine-containing compounds. This chain is 7-carboxy-7-deazaguanine synthase, found in Pyrobaculum aerophilum (strain ATCC 51768 / DSM 7523 / JCM 9630 / CIP 104966 / NBRC 100827 / IM2).